The chain runs to 400 residues: Selection and upkeep of intraepithelial T-cells protein 2 (400 aa).

Residues 1 to 21 form the signal peptide; sequence MGATGVLLCVVLHFLQMVTQS. Topologically, residues 22–240 are extracellular; it reads SEKFTVTGLQ…LSGELFSWKR (219 aa). Residues 23–133 enclose the Ig-like V-type domain; that stretch reads EKFTVTGLQR…VGEFYEEHIT (111 aa). 2 disulfide bridges follow: C46-C120 and C160-C214. The region spanning 139-225 is the Ig-like C1-type domain; it reads ATSSVMYILM…LQNLLTHQEE (87 aa). N197 is a glycosylation site (N-linked (GlcNAc...) asparagine). A helical membrane pass occupies residues 241–261; sequence VWIMILTTIGFMMIAFCMTYC. The Cytoplasmic segment spans residues 262 to 280; sequence VQQHLLYGTFSKGKCHWLK. The chain crosses the membrane as a helical span at residues 281 to 301; it reads STMIFMFSVIAVTGVMLILHL. At 302 to 321 the chain is on the extracellular side; it reads KQRVPVSDQHFELDTLWLED. The chain crosses the membrane as a helical span at residues 322–342; sequence ISVILCVLIVFIIKLISFIYF. Over 343–400 the chain is Cytoplasmic; sequence RLEGDHQGWSLPPYLSATPTAAICRLAVPEYSRGHLQLDSEDDLAGMGPSPFFITPCF.

The protein belongs to the SKINT family. As to expression, expressed in skin, thymus and mammary gland.

The protein resides in the membrane. In terms of biological role, may act by engaging a cell surface molecule on immature T-cells in the embryonic thymus. The chain is Selection and upkeep of intraepithelial T-cells protein 2 (Skint2) from Mus musculus (Mouse).